The following is a 118-amino-acid chain: MFNRSEKVAEAIHELVSGLIVKGMKDPRIGFITITGVKVTDDIRQATIYYTVMGDDEARVSTARGLASATGFLRREIGKQLRLKFAPELHFKYDQSIEYGNRIDQLLKEIETEKGSDD.

This sequence belongs to the RbfA family. As to quaternary structure, monomer. Binds 30S ribosomal subunits, but not 50S ribosomal subunits or 70S ribosomes.

It is found in the cytoplasm. One of several proteins that assist in the late maturation steps of the functional core of the 30S ribosomal subunit. Associates with free 30S ribosomal subunits (but not with 30S subunits that are part of 70S ribosomes or polysomes). Required for efficient processing of 16S rRNA. May interact with the 5'-terminal helix region of 16S rRNA. The sequence is that of Ribosome-binding factor A from Geobacter sulfurreducens (strain ATCC 51573 / DSM 12127 / PCA).